A 523-amino-acid polypeptide reads, in one-letter code: Cytidine and dCMP deaminase domain-containing protein 1 (523 aa).

A compositionally biased stretch (polar residues) spans 1–11 (MKETDQMQSLE). 2 disordered regions span residues 1–27 (MKET…GSMT) and 55–81 (QGQK…RVST). Positions 71–169 (GDNEELTRVS…SLLTEASSSE (99 aa)) constitute a CMP/dCMP-type deaminase 1 domain. Residues H110, C135, and C138 each contribute to the Zn(2+) site. Residues 272 to 284 (NLRQNMKDLILLL) carry the Nuclear export signal motif. The CMP/dCMP-type deaminase 2 domain occupies 318 to 483 (EVARHCMVQA…LNPSEAYSLD (166 aa)). H399 contributes to the Zn(2+) binding site. The Proton donor role is filled by E401. 2 residues coordinate Zn(2+): C427 and C430. The segment at 478 to 523 (EAYSLDPNEPERRENGVLRRRSAKDEQRSSKRPRLETRSAGRATLQ) is disordered. Residues 486 to 516 (EPERRENGVLRRRSAKDEQRSSKRPRLETRS) are compositionally biased toward basic and acidic residues. Residues 489 to 511 (RRENGVLRRRSAKDEQRSSKRPR) carry the Bipartite nuclear localization signal motif.

The protein belongs to the cytidine and deoxycytidylate deaminase family. It depends on Zn(2+) as a cofactor.

It is found in the cytoplasm. The protein localises to the nucleus. The enzyme catalyses 2'-deoxycytidine + H2O + H(+) = 2'-deoxyuridine + NH4(+). It catalyses the reaction cytidine + H2O + H(+) = uridine + NH4(+). Its function is as follows. Catalyzes the deamination of cytidine and deoxycytidine into uridine and deoxyuridine, respectively. May play an important role in testicular development and spermatogenesis. The sequence is that of Cytidine and dCMP deaminase domain-containing protein 1 (Cdadc1) from Mus musculus (Mouse).